The sequence spans 252 residues: Small ribosomal subunit protein uS3 (252 aa).

Residues 39–109 (IRNYVNTRLK…EVKIDVVEVV (71 aa)) form the KH type-2 domain. Residues 222–240 (MKKIRDRRNDQRSRGGRDS) are compositionally biased toward basic and acidic residues. Positions 222-252 (MKKIRDRRNDQRSRGGRDSRNKRRRRPKNTA) are disordered. The span at 241–252 (RNKRRRRPKNTA) shows a compositional bias: basic residues.

The protein belongs to the universal ribosomal protein uS3 family. Part of the 30S ribosomal subunit. Forms a tight complex with proteins S10 and S14.

Its function is as follows. Binds the lower part of the 30S subunit head. Binds mRNA in the 70S ribosome, positioning it for translation. The chain is Small ribosomal subunit protein uS3 from Chlorobium phaeobacteroides (strain BS1).